A 463-amino-acid polypeptide reads, in one-letter code: Glutamate--tRNA ligase 2 (463 aa).

The short motif at 11–21 is the 'HIGH' region element; the sequence is PSPTGYLHIGG. The 'KMSKS' region signature appears at 240–244; the sequence is KLSKR. Residue Lys-243 participates in ATP binding.

This sequence belongs to the class-I aminoacyl-tRNA synthetase family. Glutamate--tRNA ligase type 1 subfamily. In terms of assembly, monomer.

It localises to the cytoplasm. It catalyses the reaction tRNA(Glu) + L-glutamate + ATP = L-glutamyl-tRNA(Glu) + AMP + diphosphate. Its function is as follows. Catalyzes the attachment of glutamate to tRNA(Glu) in a two-step reaction: glutamate is first activated by ATP to form Glu-AMP and then transferred to the acceptor end of tRNA(Glu). The polypeptide is Glutamate--tRNA ligase 2 (Campylobacter jejuni (strain RM1221)).